The following is a 146-amino-acid chain: Deoxyuridine 5'-triphosphate nucleotidohydrolase (146 aa).

Substrate is bound by residues 60 to 62 (RSG), asparagine 73, and 77 to 79 (VID).

It belongs to the dUTPase family. Requires Mg(2+) as cofactor.

It carries out the reaction dUTP + H2O = dUMP + diphosphate + H(+). The protein operates within pyrimidine metabolism; dUMP biosynthesis; dUMP from dCTP (dUTP route): step 2/2. Functionally, this enzyme is involved in nucleotide metabolism: it produces dUMP, the immediate precursor of thymidine nucleotides and it decreases the intracellular concentration of dUTP so that uracil cannot be incorporated into DNA. The protein is Deoxyuridine 5'-triphosphate nucleotidohydrolase of Tropheryma whipplei (strain TW08/27) (Whipple's bacillus).